A 354-amino-acid chain; its full sequence is Histidinol-phosphate aminotransferase (354 aa).

At Lys-210 the chain carries N6-(pyridoxal phosphate)lysine.

Belongs to the class-II pyridoxal-phosphate-dependent aminotransferase family. Histidinol-phosphate aminotransferase subfamily. In terms of assembly, homodimer. Pyridoxal 5'-phosphate is required as a cofactor.

It carries out the reaction L-histidinol phosphate + 2-oxoglutarate = 3-(imidazol-4-yl)-2-oxopropyl phosphate + L-glutamate. It functions in the pathway amino-acid biosynthesis; L-histidine biosynthesis; L-histidine from 5-phospho-alpha-D-ribose 1-diphosphate: step 7/9. This Clostridium botulinum (strain Langeland / NCTC 10281 / Type F) protein is Histidinol-phosphate aminotransferase.